The primary structure comprises 1360 residues: DNA-directed RNA polymerase subunit beta (1360 aa).

Belongs to the RNA polymerase beta chain family. In terms of assembly, the RNAP catalytic core consists of 2 alpha, 1 beta, 1 beta' and 1 omega subunit. When a sigma factor is associated with the core the holoenzyme is formed, which can initiate transcription.

It carries out the reaction RNA(n) + a ribonucleoside 5'-triphosphate = RNA(n+1) + diphosphate. DNA-dependent RNA polymerase catalyzes the transcription of DNA into RNA using the four ribonucleoside triphosphates as substrates. In Caulobacter sp. (strain K31), this protein is DNA-directed RNA polymerase subunit beta.